Consider the following 874-residue polypeptide: Alanine--tRNA ligase (874 aa).

Zn(2+)-binding residues include His-563, His-567, Cys-665, and His-669.

It belongs to the class-II aminoacyl-tRNA synthetase family. Zn(2+) serves as cofactor.

Its subcellular location is the cytoplasm. It catalyses the reaction tRNA(Ala) + L-alanine + ATP = L-alanyl-tRNA(Ala) + AMP + diphosphate. In terms of biological role, catalyzes the attachment of alanine to tRNA(Ala) in a two-step reaction: alanine is first activated by ATP to form Ala-AMP and then transferred to the acceptor end of tRNA(Ala). Also edits incorrectly charged Ser-tRNA(Ala) and Gly-tRNA(Ala) via its editing domain. In Haemophilus influenzae (strain ATCC 51907 / DSM 11121 / KW20 / Rd), this protein is Alanine--tRNA ligase.